Here is a 206-residue protein sequence, read N- to C-terminus: Thiamine-phosphate synthase (206 aa).

4-amino-2-methyl-5-(diphosphooxymethyl)pyrimidine is bound by residues 39–43 (QYREK) and asparagine 74. Mg(2+) is bound by residues aspartate 75 and aspartate 94. A 4-amino-2-methyl-5-(diphosphooxymethyl)pyrimidine-binding site is contributed by serine 112. 138 to 140 (TNT) is a 2-[(2R,5Z)-2-carboxy-4-methylthiazol-5(2H)-ylidene]ethyl phosphate binding site. Lysine 141 is a 4-amino-2-methyl-5-(diphosphooxymethyl)pyrimidine binding site. 2-[(2R,5Z)-2-carboxy-4-methylthiazol-5(2H)-ylidene]ethyl phosphate contacts are provided by residues glycine 170 and 190-191 (IS).

This sequence belongs to the thiamine-phosphate synthase family. Requires Mg(2+) as cofactor.

The enzyme catalyses 2-[(2R,5Z)-2-carboxy-4-methylthiazol-5(2H)-ylidene]ethyl phosphate + 4-amino-2-methyl-5-(diphosphooxymethyl)pyrimidine + 2 H(+) = thiamine phosphate + CO2 + diphosphate. The catalysed reaction is 2-(2-carboxy-4-methylthiazol-5-yl)ethyl phosphate + 4-amino-2-methyl-5-(diphosphooxymethyl)pyrimidine + 2 H(+) = thiamine phosphate + CO2 + diphosphate. It catalyses the reaction 4-methyl-5-(2-phosphooxyethyl)-thiazole + 4-amino-2-methyl-5-(diphosphooxymethyl)pyrimidine + H(+) = thiamine phosphate + diphosphate. It functions in the pathway cofactor biosynthesis; thiamine diphosphate biosynthesis; thiamine phosphate from 4-amino-2-methyl-5-diphosphomethylpyrimidine and 4-methyl-5-(2-phosphoethyl)-thiazole: step 1/1. Condenses 4-methyl-5-(beta-hydroxyethyl)thiazole monophosphate (THZ-P) and 2-methyl-4-amino-5-hydroxymethyl pyrimidine pyrophosphate (HMP-PP) to form thiamine monophosphate (TMP). In Oceanobacillus iheyensis (strain DSM 14371 / CIP 107618 / JCM 11309 / KCTC 3954 / HTE831), this protein is Thiamine-phosphate synthase.